The sequence spans 253 residues: HTH-type transcriptional regulator YdeO (253 aa).

Residues 137–233 (GKVRNIVNMK…GNSPKRVSKE (97 aa)) enclose the HTH araC/xylS-type domain. DNA-binding regions (H-T-H motif) lie at residues 154 to 175 (KDICDCLYISESLLKKKLKQEQ) and 200 to 223 (VNKIAEQCGYASTSYFIYAFRKHF).

Functionally, induces the expression of gadE and mdtEF. Could also regulate the expression of other genes involved in acid resistance. In Escherichia coli O157:H7, this protein is HTH-type transcriptional regulator YdeO.